The primary structure comprises 360 residues: Peptide chain release factor 1 (360 aa).

At Gln236 the chain carries N5-methylglutamine.

Belongs to the prokaryotic/mitochondrial release factor family. Post-translationally, methylated by PrmC. Methylation increases the termination efficiency of RF1.

It is found in the cytoplasm. Peptide chain release factor 1 directs the termination of translation in response to the peptide chain termination codons UAG and UAA. The chain is Peptide chain release factor 1 from Limosilactobacillus reuteri subsp. reuteri (strain JCM 1112) (Lactobacillus reuteri).